The primary structure comprises 122 residues: Small ribosomal subunit protein uS13 (122 aa).

The interval arginine 99–lysine 122 is disordered.

The protein belongs to the universal ribosomal protein uS13 family. In terms of assembly, part of the 30S ribosomal subunit. Forms a loose heterodimer with protein S19. Forms two bridges to the 50S subunit in the 70S ribosome.

Its function is as follows. Located at the top of the head of the 30S subunit, it contacts several helices of the 16S rRNA. In the 70S ribosome it contacts the 23S rRNA (bridge B1a) and protein L5 of the 50S subunit (bridge B1b), connecting the 2 subunits; these bridges are implicated in subunit movement. Contacts the tRNAs in the A and P-sites. This is Small ribosomal subunit protein uS13 from Allorhizobium ampelinum (strain ATCC BAA-846 / DSM 112012 / S4) (Agrobacterium vitis (strain S4)).